The chain runs to 484 residues: Chromosomal replication initiator protein DnaA (484 aa).

The segment at 1–73 is domain I, interacts with DnaA modulators; it reads MQEGKNIWSL…EILIEKGHNT (73 aa). Residues 73–140 are domain II; the sequence is TINVEFINSP…EEIHTKYRNP (68 aa). The domain III, AAA+ region stretch occupies residues 141 to 357; the sequence is FLKKKYTFEN…AAVTKLKAHI (217 aa). The ATP site is built by glycine 185, glycine 187, lysine 188, and threonine 189. Residues 358-484 form a domain IV, binds dsDNA region; sequence DLEDIEIDTS…IELMNKINKK (127 aa).

The protein belongs to the DnaA family. Oligomerizes as a right-handed, spiral filament on DNA at oriC.

The protein resides in the cytoplasm. Functionally, plays an essential role in the initiation and regulation of chromosomal replication. ATP-DnaA binds to the origin of replication (oriC) to initiate formation of the DNA replication initiation complex once per cell cycle. Binds the DnaA box (a 9 base pair repeat at the origin) and separates the double-stranded (ds)DNA. Forms a right-handed helical filament on oriC DNA; dsDNA binds to the exterior of the filament while single-stranded (ss)DNA is stabiized in the filament's interior. The ATP-DnaA-oriC complex binds and stabilizes one strand of the AT-rich DNA unwinding element (DUE), permitting loading of DNA polymerase. After initiation quickly degrades to an ADP-DnaA complex that is not apt for DNA replication. Binds acidic phospholipids. This Borrelia hermsii (strain HS1 / DAH) protein is Chromosomal replication initiator protein DnaA.